A 159-amino-acid polypeptide reads, in one-letter code: Transcription elongation factor GreA (159 aa).

Residues 1 to 76 (MAEEKEVVLT…SLEKTLKKAR (76 aa)) adopt a coiled-coil conformation.

Belongs to the GreA/GreB family.

Its function is as follows. Necessary for efficient RNA polymerase transcription elongation past template-encoded arresting sites. The arresting sites in DNA have the property of trapping a certain fraction of elongating RNA polymerases that pass through, resulting in locked ternary complexes. Cleavage of the nascent transcript by cleavage factors such as GreA or GreB allows the resumption of elongation from the new 3'terminus. GreA releases sequences of 2 to 3 nucleotides. The sequence is that of Transcription elongation factor GreA from Syntrophomonas wolfei subsp. wolfei (strain DSM 2245B / Goettingen).